The following is a 100-amino-acid chain: ATP synthase subunit c (100 aa).

2 helical membrane passes run 27–47 and 72–92; these read SVIAAGIGLGLAALGGAIGMG and FIALAMIEAQVIYALVITLIV.

Belongs to the ATPase C chain family. F-type ATPases have 2 components, F(1) - the catalytic core - and F(0) - the membrane proton channel. F(1) has five subunits: alpha(3), beta(3), gamma(1), delta(1), epsilon(1). F(0) has three main subunits: a(1), b(2) and c(10-14). The alpha and beta chains form an alternating ring which encloses part of the gamma chain. F(1) is attached to F(0) by a central stalk formed by the gamma and epsilon chains, while a peripheral stalk is formed by the delta and b chains.

It is found in the cell inner membrane. F(1)F(0) ATP synthase produces ATP from ADP in the presence of a proton or sodium gradient. F-type ATPases consist of two structural domains, F(1) containing the extramembraneous catalytic core and F(0) containing the membrane proton channel, linked together by a central stalk and a peripheral stalk. During catalysis, ATP synthesis in the catalytic domain of F(1) is coupled via a rotary mechanism of the central stalk subunits to proton translocation. The chain is ATP synthase subunit c from Campylobacter curvus (strain 525.92).